The sequence spans 809 residues: Penicillin-binding protein 1A (809 aa).

Residues 1–34 (MSDNTKTNSRNKSVKRTKKVKKKKKFGFFKKLFT) lie on the Cytoplasmic side of the membrane. A helical; Signal-anchor for type II membrane protein transmembrane segment spans residues 35-55 (ILFCLFILLSVAASGVIFAIV). Residues 56–809 (KTSPNLDING…PNNNTTNTNK (754 aa)) lie on the Extracellular side of the membrane. The tract at residues 74 to 251 (SQLYDDNNNP…PSAYYPFSQN (178 aa)) is transglycosylase. Residue glutamate 113 is the Proton donor; for transglycosylase activity of the active site. A transpeptidase region spans residues 381–664 (AAATLFDYHT…VAEIWGEIMK (284 aa)). The active-site Acyl-ester intermediate; for transpeptidase activity is the serine 422. The tract at residues 694–809 (SPSNLSGDDS…PNNNTTNTNK (116 aa)) is disordered.

In the N-terminal section; belongs to the glycosyltransferase 51 family. It in the C-terminal section; belongs to the transpeptidase family.

It is found in the cell membrane. The enzyme catalyses [GlcNAc-(1-&gt;4)-Mur2Ac(oyl-L-Ala-gamma-D-Glu-L-Lys-D-Ala-D-Ala)](n)-di-trans,octa-cis-undecaprenyl diphosphate + beta-D-GlcNAc-(1-&gt;4)-Mur2Ac(oyl-L-Ala-gamma-D-Glu-L-Lys-D-Ala-D-Ala)-di-trans,octa-cis-undecaprenyl diphosphate = [GlcNAc-(1-&gt;4)-Mur2Ac(oyl-L-Ala-gamma-D-Glu-L-Lys-D-Ala-D-Ala)](n+1)-di-trans,octa-cis-undecaprenyl diphosphate + di-trans,octa-cis-undecaprenyl diphosphate + H(+). It catalyses the reaction Preferential cleavage: (Ac)2-L-Lys-D-Ala-|-D-Ala. Also transpeptidation of peptidyl-alanyl moieties that are N-acyl substituents of D-alanine.. Its pathway is cell wall biogenesis; peptidoglycan biosynthesis. Functionally, cell wall formation. Synthesis of cross-linked peptidoglycan from the lipid intermediates. The enzyme has a penicillin-insensitive transglycosylase N-terminal domain (formation of linear glycan strands) and a penicillin-sensitive transpeptidase C-terminal domain (cross-linking of the peptide subunits). The sequence is that of Penicillin-binding protein 1A (pbpA) from Clostridium acetobutylicum (strain ATCC 824 / DSM 792 / JCM 1419 / IAM 19013 / LMG 5710 / NBRC 13948 / NRRL B-527 / VKM B-1787 / 2291 / W).